Reading from the N-terminus, the 169-residue chain is DNA damage-inducible transcript 3 protein (169 aa).

Residues 10-18 are interaction with TRIB3; it reads FGTLSSWEL. The tract at residues 10–26 is N-terminal; it reads FGTLSSWELEAWYEDLQ. Ser-14, Ser-15, Ser-30, and Ser-31 each carry phosphoserine; by CK2. The segment at 32–139 is disordered; the sequence is DENGGTYVSP…KVAQLAEENE (108 aa). Positions 74 to 89 are enriched in low complexity; sequence TSTSQSPHSPDSSQSS. Phosphoserine; by MAPK14 occurs at positions 79 and 82. Residues 99 to 162 form the bZIP domain; the sequence is QGRTRKRKQS…EATRRALIDR (64 aa). The basic motif stretch occupies residues 101-130; the sequence is RTRKRKQSGHSPARAGKQRMKEKEQENERK. Positions 119-139 are enriched in basic and acidic residues; that stretch reads RMKEKEQENERKVAQLAEENE. The segment at 134 to 148 is leucine-zipper; that stretch reads LAEENERLKQEIERL.

Belongs to the bZIP family. Heterodimer. Interacts with TCF7L2/TCF4, EP300/P300, HDAC1, HDAC5 and HDAC6. Interacts with TRIB3 which blocks its association with EP300/P300. Interacts with FOXO3, CEBPB and ATF4. As to quaternary structure, interacts with isoform AltDDIT3 of DDIT3. Post-translationally, ubiquitinated, leading to its degradation by the proteasome. In terms of processing, phosphorylation at serine residues by MAPK14 enhances its transcriptional activation activity while phosphorylation at serine residues by CK2 inhibits its transcriptional activation activity.

It is found in the cytoplasm. Its subcellular location is the nucleus. In terms of biological role, multifunctional transcription factor in endoplasmic reticulum (ER) stress response. Plays an essential role in the response to a wide variety of cell stresses and induces cell cycle arrest and apoptosis in response to ER stress. Plays a dual role both as an inhibitor of CCAAT/enhancer-binding protein (C/EBP) function and as an activator of other genes. Acts as a dominant-negative regulator of C/EBP-induced transcription: dimerizes with members of the C/EBP family, impairs their association with C/EBP binding sites in the promoter regions, and inhibits the expression of C/EBP regulated genes. Positively regulates the transcription of TRIB3, IL6, IL8, IL23, TNFRSF10B/DR5, PPP1R15A/GADD34, BBC3/PUMA, BCL2L11/BIM and ERO1L. Negatively regulates; expression of BCL2 and MYOD1, ATF4-dependent transcriptional activation of asparagine synthetase (ASNS), CEBPA-dependent transcriptional activation of hepcidin (HAMP) and CEBPB-mediated expression of peroxisome proliferator-activated receptor gamma (PPARG). Together with ATF4, mediates ER-mediated cell death by promoting expression of genes involved in cellular amino acid metabolic processes, mRNA translation and the unfolded protein response (UPR) in response to ER stress. Inhibits the canonical Wnt signaling pathway by binding to TCF7L2/TCF4, impairing its DNA-binding properties and repressing its transcriptional activity. Plays a regulatory role in the inflammatory response through the induction of caspase-11 (CASP4/CASP11) which induces the activation of caspase-1 (CASP1) and both these caspases increase the activation of pro-IL1B to mature IL1B which is involved in the inflammatory response. Acts as a major regulator of postnatal neovascularization through regulation of endothelial nitric oxide synthase (NOS3)-related signaling. The polypeptide is DNA damage-inducible transcript 3 protein (DDIT3) (Homo sapiens (Human)).